Consider the following 269-residue polypeptide: Leucinostatins biosynthesis cluster protein T (269 aa).

Positions 1–15 (MHIILTGTGLVGAIA) are cleaved as a signal peptide. N254 is a glycosylation site (N-linked (GlcNAc...) asparagine).

Its function is as follows. Part of the gene cluster that mediates the biosynthesis of the lipopeptide antibiotics leucinostatins that show extensive biological activities, including antimalarial, antiviral, antibacterial, antifungal, and antitumor activities, as well as phytotoxic. The function of lcsT within the leucinostatins biosynthesis has not been identified yet. The sequence is that of Leucinostatins biosynthesis cluster protein T from Purpureocillium lilacinum (Paecilomyces lilacinus).